Consider the following 336-residue polypeptide: Dihydroorotate dehydrogenase (quinone) (336 aa).

Residues 62–66 and Thr-86 contribute to the FMN site; that span reads AGLDK. Lys-66 is a binding site for substrate. 111-115 provides a ligand contact to substrate; the sequence is NRMGF. FMN is bound by residues Asn-139 and Asn-172. Asn-172 lines the substrate pocket. Ser-175 (nucleophile) is an active-site residue. Residue Asn-177 participates in substrate binding. FMN is bound by residues Lys-217 and Thr-245. 246 to 247 serves as a coordination point for substrate; it reads NT. FMN contacts are provided by residues Gly-268, Gly-297, and 318 to 319; that span reads YS.

It belongs to the dihydroorotate dehydrogenase family. Type 2 subfamily. As to quaternary structure, monomer. Requires FMN as cofactor.

The protein resides in the cell membrane. It catalyses the reaction (S)-dihydroorotate + a quinone = orotate + a quinol. Its pathway is pyrimidine metabolism; UMP biosynthesis via de novo pathway; orotate from (S)-dihydroorotate (quinone route): step 1/1. Its function is as follows. Catalyzes the conversion of dihydroorotate to orotate with quinone as electron acceptor. The chain is Dihydroorotate dehydrogenase (quinone) from Aeromonas salmonicida (strain A449).